The following is a 288-amino-acid chain: Cyclin-dependent kinase 2 homolog (288 aa).

The Protein kinase domain maps to 4–284 (YHGLEKIGEG…AKEALQHAYF (281 aa)). ATP is bound by residues 10–18 (IGEGTYGVV) and lysine 32. The residue at position 14 (threonine 14) is a Phosphothreonine. The residue at position 15 (tyrosine 15) is a Phosphotyrosine. Aspartate 125 acts as the Proton acceptor in catalysis. Threonine 158 is modified (phosphothreonine).

Belongs to the protein kinase superfamily. CMGC Ser/Thr protein kinase family. CDC2/CDKX subfamily. In terms of assembly, may form a complex composed of at least the catalytic subunit CRK2 and a cyclin. Requires Mg(2+) as cofactor.

Its subcellular location is the cytoplasm. It catalyses the reaction L-seryl-[protein] + ATP = O-phospho-L-seryl-[protein] + ADP + H(+). It carries out the reaction L-threonyl-[protein] + ATP = O-phospho-L-threonyl-[protein] + ADP + H(+). The enzyme catalyses [DNA-directed RNA polymerase] + ATP = phospho-[DNA-directed RNA polymerase] + ADP + H(+). With respect to regulation, phosphorylation at Thr-14 or Tyr-15 inactivates the enzyme, while phosphorylation at Thr-158 activates it. Functionally, serine/threonine-protein kinase. Involved in the control of the cell cycle. Required for entry into S-phase and mitosis. Probable component of the kinase complex that phosphorylates the repetitive C-terminus of RNA polymerase II. This chain is Cyclin-dependent kinase 2 homolog, found in Plasmodium knowlesi (strain H).